We begin with the raw amino-acid sequence, 342 residues long: Methionyl-tRNA formyltransferase (342 aa).

(6S)-5,6,7,8-tetrahydrofolate is bound at residue 110–113; the sequence is SLLP.

This sequence belongs to the Fmt family.

It carries out the reaction L-methionyl-tRNA(fMet) + (6R)-10-formyltetrahydrofolate = N-formyl-L-methionyl-tRNA(fMet) + (6S)-5,6,7,8-tetrahydrofolate + H(+). Functionally, attaches a formyl group to the free amino group of methionyl-tRNA(fMet). The formyl group appears to play a dual role in the initiator identity of N-formylmethionyl-tRNA by promoting its recognition by IF2 and preventing the misappropriation of this tRNA by the elongation apparatus. This Synechococcus sp. (strain CC9311) protein is Methionyl-tRNA formyltransferase.